Here is a 386-residue protein sequence, read N- to C-terminus: 1-deoxy-D-xylulose 5-phosphate reductoisomerase (386 aa).

Residues serine 10, glycine 11, serine 12, valine 13, asparagine 38, and asparagine 120 each coordinate NADPH. Position 121 (lysine 121) interacts with 1-deoxy-D-xylulose 5-phosphate. Glutamate 122 contributes to the NADPH binding site. Aspartate 146 serves as a coordination point for Mn(2+). 1-deoxy-D-xylulose 5-phosphate contacts are provided by serine 147, glutamate 148, serine 172, and histidine 195. Glutamate 148 is a Mn(2+) binding site. NADPH is bound at residue glycine 201. 1-deoxy-D-xylulose 5-phosphate contacts are provided by serine 208, asparagine 213, lysine 214, and glutamate 217. A Mn(2+)-binding site is contributed by glutamate 217.

It belongs to the DXR family. The cofactor is Mg(2+). It depends on Mn(2+) as a cofactor.

The enzyme catalyses 2-C-methyl-D-erythritol 4-phosphate + NADP(+) = 1-deoxy-D-xylulose 5-phosphate + NADPH + H(+). It functions in the pathway isoprenoid biosynthesis; isopentenyl diphosphate biosynthesis via DXP pathway; isopentenyl diphosphate from 1-deoxy-D-xylulose 5-phosphate: step 1/6. Functionally, catalyzes the NADPH-dependent rearrangement and reduction of 1-deoxy-D-xylulose-5-phosphate (DXP) to 2-C-methyl-D-erythritol 4-phosphate (MEP). In Leptospira biflexa serovar Patoc (strain Patoc 1 / Ames), this protein is 1-deoxy-D-xylulose 5-phosphate reductoisomerase.